Here is a 335-residue protein sequence, read N- to C-terminus: Aliphatic sulfonates import ATP-binding protein SsuB (335 aa).

Residues 29 to 61 (DGDAQDAAVYERDGGAHAPPFASGGAPPDGDRA) form a disordered region. The ABC transporter domain maps to 74 to 293 (VRLTRVSKRY…ARASAAFAAL (220 aa)). 106-113 (GRSGCGKS) lines the ATP pocket. The segment at 308-335 (APAAPNAAGPEGASRGRAAPASGLRWAV) is disordered.

It belongs to the ABC transporter superfamily. Aliphatic sulfonates importer (TC 3.A.1.17.2) family. In terms of assembly, the complex is composed of two ATP-binding proteins (SsuB), two transmembrane proteins (SsuC) and a solute-binding protein (SsuA).

It is found in the cell inner membrane. It carries out the reaction ATP + H2O + aliphatic sulfonate-[sulfonate-binding protein]Side 1 = ADP + phosphate + aliphatic sulfonateSide 2 + [sulfonate-binding protein]Side 1.. Part of the ABC transporter complex SsuABC involved in aliphatic sulfonates import. Responsible for energy coupling to the transport system. This is Aliphatic sulfonates import ATP-binding protein SsuB from Burkholderia pseudomallei (strain 1710b).